The primary structure comprises 84 residues: U-scoloptoxin(10)-Er1a (84 aa).

Positions methionine 1–glycine 24 are cleaved as a signal peptide.

It belongs to the scoloptoxin-10 family. In terms of processing, contains 3 disulfide bonds. In terms of tissue distribution, expressed by the venom gland.

It localises to the secreted. This Ethmostigmus rubripes (Giant centipede) protein is U-scoloptoxin(10)-Er1a.